The sequence spans 229 residues: Cytidylate kinase (229 aa).

12 to 20 (GPSGAGKGT) lines the ATP pocket.

It belongs to the cytidylate kinase family. Type 1 subfamily.

It is found in the cytoplasm. It catalyses the reaction CMP + ATP = CDP + ADP. It carries out the reaction dCMP + ATP = dCDP + ADP. This chain is Cytidylate kinase, found in Shewanella frigidimarina (strain NCIMB 400).